The primary structure comprises 188 residues: GMP synthase [glutamine-hydrolyzing] subunit A (188 aa).

The Glutamine amidotransferase type-1 domain maps to 3-188 (PLYVVNNYGQ…FSICTGQNKG (186 aa)). Cysteine 75 (nucleophile) is an active-site residue. Catalysis depends on residues histidine 162 and glutamate 164.

As to quaternary structure, heterodimer composed of a glutamine amidotransferase subunit (A) and a GMP-binding subunit (B).

The catalysed reaction is XMP + L-glutamine + ATP + H2O = GMP + L-glutamate + AMP + diphosphate + 2 H(+). It functions in the pathway purine metabolism; GMP biosynthesis; GMP from XMP (L-Gln route): step 1/1. Functionally, catalyzes the synthesis of GMP from XMP. The protein is GMP synthase [glutamine-hydrolyzing] subunit A of Methanospirillum hungatei JF-1 (strain ATCC 27890 / DSM 864 / NBRC 100397 / JF-1).